A 1597-amino-acid chain; its full sequence is MAEQTLLSKLNALSQKVIPPASPSQASILTEEVIRNWPERSKTLCSDFTALESNDEKEDWLRTLFIELFDFINKNDENSPLKLSDVASFTNELVNHERQVSQASIVGKMFIAVSSTVPNINDLTTISLCKLIPSLHEELFKFSWISSKLLNKEQTTLLRHLLKKSKYELKKYNLLVENSVGYGQLVALLILAYYDPDNFSKVSAYLKEIYHIMGKYSLDSIRTLDVILNVSSQFITEGYKFFIALLRKSDSWPSSHVANNSNYSSLNEGGNMIAANIISFNLSQYNEEVDKENYERYMDMCCILLKNGFVNFYSIWDNVKPEMEFLQEYIQNLETELEEESTKGVENPLAMAAALSTENETDEDNALVVNDDVNMKDKISEETNADIESKGKQKTQQDILLFGKIKLLERLLIHGCVIPVIHVLKQYPKVLYVSESLSRYLGRVFEYLLNPLYTSMTSSGESKDMATALMITRIDNGILAHKPRLIHKYKTHEPFESLELNSSYVFYYSEWNSNLTPFASVNDLFENSHIYLSIIGPYLGRIPTLLSKISRIGVADIQKNHGSESLHVTIDKWIDYVRKFIFPATSLLQNNPIATSEVYELMKFFPFEKRYFIYNEMMTKLSQDILPLKVSFNKAEREAKSILKALSIDTIAKESRRFAKLISTNPLASLVPAVKQIENYDKVSELVVYTTKYFNDFAYDVLQFVLLLRLTYNRPAVQFDGVNQAMWVQRLSIFIAGLAKNCPNMDISNIITYILKTLHNGNIIAVSILKELIITVGGIRDLNEVNMKQLLMLNSGSPLKQYARHLIYDFRDDNSVISSRLTSFFTDQSAISEIILLLYTLNLKANTQNSHYKILSTRCDEMNTLLWSFIELIKHCLKGKAFEENVLPFVELNNRFHLSTPWTFHIWRDYLDNQLNSNENFSIDELIEGAEFSDVDLTKISKDLFTTFWRLSLYDIHFDKSLYDERKNALSGENTGHMSNRKKHLIQNQIKDILVTGISHQRAFKKTSEFISEKSNVWNKDCGEDQIKIFLQNCVVPRVLFSPSDALFSSFFIFMAFRTENLMSILNTCITSNILKTLLFCCTSSEAGNLGLFFTDVLKKLEKMRLNGDFNDQASRKLYEWHSVITEQVIDLLSEKNYMSIRNGIEFMKHVTSVFPVVKAHIQLVYTTLEENLINEEREDIKLPSSALIGHLKARLKDALELDEFCTLTEEEAEQKRIREMELEEIKNYETACQNEQKQVALRKQLELNKSQRLQNDPPKSVASGSAGLNSKDRYTYSRNEPVIPTKPSSSQWSYSKVTRHVDDINHYLATNHLQKAISLVENDDETRNLRKLSKQNMPIFDFRNSTLEIFERYFRTLIQNPQNPDFAEKIDSLKRYIKNISREPYPDTTSSYSEAAAPEYTKRSSRYSGNAGGKDGYGSSNYRGPSNDRSAPKNIKPISSYAHKRSELPTRPSKSKTYNDRSRALRPTGPDRGDGFDQRDNRLREEYKKNSSQRSQLRFPEKPFQEGKDSSKANPYQASSYKRDSPSENEEKPNKRFKKDETIRNKFQTQDYRNTRDSGAAHRANENQRYNGNRKSNTQALPQGPKGGNYVSRYQR.

Disordered regions lie at residues 1250–1274 (KSQRLQNDPPKSVASGSAGLNSKDR) and 1384–1597 (EPYP…RYQR). Polar residues predominate over residues 1419 to 1430 (GSSNYRGPSNDR). Basic and acidic residues-rich tracts occupy residues 1458–1490 (TYNDRSRALRPTGPDRGDGFDQRDNRLREEYKK), 1500–1512 (FPEKPFQEGKDSS), 1522–1545 (YKRDSPSENEEKPNKRFKKDETIR), and 1554–1567 (RNTRDSGAAHRANE). The segment covering 1568–1582 (NQRYNGNRKSNTQAL) has biased composition (polar residues).

This sequence belongs to the THOC2 family. In terms of assembly, component of the THO complex, which is composed of HPR1, MFT1, THO2 and THP2. Together with SUB2, TEX1 and YRA1, THO forms the transcription/export (TREX) complex. THO associates with DNA and RNA in vitro.

It localises to the nucleus. In terms of biological role, component the THO subcomplex of the TREX complex, which operates in coupling transcription elongation to mRNA export. The THO complex is recruited to transcribed genes and moves along the gene with the elongating polymerase during transcription. THO is important for stabilizing nascent RNA in the RNA polymerase II elongation complex by preventing formation of DNA:RNA hybrids behind the elongating polymerase. It functions in cotranscriptional formation of an export-competent messenger ribonucleoprotein particle (mRNP) by facilitating the loading of ATP-dependent RNA helicase SUB2 and the mRNA export factor YRA1 along the nascent mRNA. The protein is THO complex subunit 2 (THO2) of Saccharomyces cerevisiae (strain ATCC 204508 / S288c) (Baker's yeast).